Reading from the N-terminus, the 108-residue chain is Phosphoribosyl-ATP pyrophosphatase (108 aa).

Belongs to the PRA-PH family.

The protein resides in the cytoplasm. It carries out the reaction 1-(5-phospho-beta-D-ribosyl)-ATP + H2O = 1-(5-phospho-beta-D-ribosyl)-5'-AMP + diphosphate + H(+). It functions in the pathway amino-acid biosynthesis; L-histidine biosynthesis; L-histidine from 5-phospho-alpha-D-ribose 1-diphosphate: step 2/9. The chain is Phosphoribosyl-ATP pyrophosphatase from Chromobacterium violaceum (strain ATCC 12472 / DSM 30191 / JCM 1249 / CCUG 213 / NBRC 12614 / NCIMB 9131 / NCTC 9757 / MK).